A 2588-amino-acid chain; its full sequence is Histone-lysine N-methyltransferase, H3 lysine-36 specific (2588 aa).

Phosphoserine is present on residues Ser-110 and Ser-118. Disordered stretches follow at residues 209 to 264 (GSEQ…LGDT) and 277 to 307 (LSFQ…TSQE). Over residues 235–249 (EKQKNKQRSEVDGSN) the composition is skewed to basic and acidic residues. Residues 298–307 (GTSSPSTSQE) show a composition bias toward polar residues. Ser-380 and Ser-383 each carry phosphoserine. Positions 383–403 (SADEKEKPCAKSRVRKSSDNI) are disordered. Lys-802 participates in a covalent cross-link: Glycyl lysine isopeptide (Lys-Gly) (interchain with G-Cter in SUMO2). Disordered regions lie at residues 830-899 (ASYR…SDKR), 947-987 (ERKR…PGKE), and 1008-1133 (FDSK…PRLN). Residues 855 to 874 (GSSTPNSEKPGDSTQDSVHQ) show a composition bias toward polar residues. Positions 881 to 895 (SALSGELSSSLSSLA) are enriched in low complexity. The span at 1008–1033 (FDSKAKQSDPDKNLEKEPSFENRKGP) shows a compositional bias: basic and acidic residues. Residues 1054-1073 (PKKRWQRLNQRRPKPGKRAN) are compositionally biased toward basic residues. A Glycyl lysine isopeptide (Lys-Gly) (interchain with G-Cter in SUMO2) cross-link involves residue Lys-1237. The interval 1279–1324 (ASPRPALESEELLVKTPGNYESKRQRKPTKKLLESNDLDPGFMPKK) is disordered. Ser-1408 is modified (phosphoserine). 3 consecutive PHD-type zinc fingers follow at residues 1441 to 1487 (ENVC…CHTG), 1488 to 1544 (IHTC…CHAA), and 1605 to 1649 (VSWC…CKAG). The 63-residue stretch at 1654-1716 (YREIVWVKVG…QARVFPYMEG (63 aa)) folds into the PWWP domain. One can recognise an AWS domain in the interval 1788-1838 (SEIPRCNCKATDENPCGIDSECINRMLLYECHPTVCPAGVRCQNQCFSKRQ). The SET domain occupies 1840–1957 (PDVEIFRTLQ…AGTELTFNYN (118 aa)). S-adenosyl-L-methionine contacts are provided by residues 1850–1852 (RGW), 1892–1895 (TNFY), 1918–1919 (NH), Asn-1963, and Lys-1969. The inhibits enzyme activity in the absence of bound histone stretch occupies residues 1958 to 1964 (LECLGNG). A Post-SET domain is found at 1964–1980 (GKTVCKCGAPNCSGFLG). The interval 1989 to 2010 (VTEEKSRKFKRKPHGKRRSQGE) is disordered. Basic residues predominate over residues 1995 to 2006 (RKFKRKPHGKRR). Residues 2016–2063 (EDECFSCGDAGQLVSCKKPGCPKVYHADCLNLTKRPAGKWECPWHQCD) form a PHD-type 4; atypical zinc finger. 4 disordered regions span residues 2105-2320 (PCGP…PPPE), 2333-2423 (KEKA…PSEH), 2447-2521 (YESA…WGLG), and 2560-2588 (RGQD…SEKK). Residues 2179–2196 (RPPERTDSSSHLLDRIRD) show a composition bias toward basic and acidic residues. Positions 2201 to 2212 (GTKSQSLVSSQR) are enriched in polar residues. The segment covering 2213-2223 (PQDRPPAKEGP) has biased composition (basic and acidic residues). The span at 2232 to 2249 (SPMTRPSSSPSVSSLPLE) shows a compositional bias: low complexity. A compositionally biased stretch (basic and acidic residues) spans 2250–2261 (RPLRMTDSRLDK). Phosphoserine is present on Ser-2267. Thr-2360 is subject to Phosphothreonine. The residue at position 2369 (Ser-2369) is a Phosphoserine. Lys-2509 participates in a covalent cross-link: Glycyl lysine isopeptide (Lys-Gly) (interchain with G-Cter in SUMO2).

The protein belongs to the class V-like SAM-binding methyltransferase superfamily. Interacts with AR DNA- and ligand-binding domains. Interacts with the ligand-binding domains of RARA and THRA in the absence of ligand; in the presence of ligand the interaction is severely disrupted but some binding still occurs. Interacts with the ligand-binding domains of RXRA and ESRRA only in the presence of ligand. Interacts with ZNF496. In terms of tissue distribution, expressed in the embryo and the outer region of the uterine decidua at early post-implantation 5.5 dpc stage. Uniformly expressed in embryonic and extraembryonic tissues during gastrulation stage 7.5 dpc. Expressed differentially after stage 14.5 dpc with highest expression in proliferating cells. Enriched in the telencephalic region of the brain, spinal cord, intestinal crypt, tooth buds, thymus and salivary glands at stage 16.5 dpc. Also expressed in the ossification region of developing bones and in the periosteum.

The protein localises to the nucleus. It localises to the chromosome. The enzyme catalyses L-lysyl(36)-[histone H3] + 2 S-adenosyl-L-methionine = N(6),N(6)-dimethyl-L-lysyl(36)-[histone H3] + 2 S-adenosyl-L-homocysteine + 2 H(+). Its function is as follows. Histone methyltransferase that dimethylates Lys-36 of histone H3 (H3K36me2). Transcriptional intermediary factor capable of negatively influencing transcription. May also positively influence transcription. Essential for early post-implantation development. The polypeptide is Histone-lysine N-methyltransferase, H3 lysine-36 specific (Mus musculus (Mouse)).